A 399-amino-acid chain; its full sequence is Methylthioribose kinase (399 aa).

Residues Asn-40, Lys-57, and 111 to 113 (EDL) contribute to the ATP site. Asp-229 provides a ligand contact to substrate. 246 to 248 (DAE) is a binding site for ATP. Arg-344 provides a ligand contact to substrate.

It belongs to the methylthioribose kinase family. As to quaternary structure, homodimer.

It carries out the reaction 5-(methylsulfanyl)-D-ribose + ATP = 5-(methylsulfanyl)-alpha-D-ribose 1-phosphate + ADP + H(+). It functions in the pathway amino-acid biosynthesis; L-methionine biosynthesis via salvage pathway; S-methyl-5-thio-alpha-D-ribose 1-phosphate from S-methyl-5'-thioadenosine (hydrolase route): step 2/2. In terms of biological role, catalyzes the phosphorylation of methylthioribose into methylthioribose-1-phosphate. This chain is Methylthioribose kinase, found in Citrobacter koseri (strain ATCC BAA-895 / CDC 4225-83 / SGSC4696).